The following is a 281-amino-acid chain: Pantothenate synthetase (281 aa).

Residue 30 to 37 (MGYLHEGH) participates in ATP binding. Histidine 37 functions as the Proton donor in the catalytic mechanism. Glutamine 61 serves as a coordination point for (R)-pantoate. Beta-alanine is bound at residue glutamine 61. 147 to 150 (GQKD) contacts ATP. Glutamine 153 is a (R)-pantoate binding site. ATP is bound by residues valine 176 and 184–187 (MSSR).

The protein belongs to the pantothenate synthetase family. In terms of assembly, homodimer.

It is found in the cytoplasm. The enzyme catalyses (R)-pantoate + beta-alanine + ATP = (R)-pantothenate + AMP + diphosphate + H(+). The protein operates within cofactor biosynthesis; (R)-pantothenate biosynthesis; (R)-pantothenate from (R)-pantoate and beta-alanine: step 1/1. Catalyzes the condensation of pantoate with beta-alanine in an ATP-dependent reaction via a pantoyl-adenylate intermediate. This chain is Pantothenate synthetase, found in Acetivibrio thermocellus (strain ATCC 27405 / DSM 1237 / JCM 9322 / NBRC 103400 / NCIMB 10682 / NRRL B-4536 / VPI 7372) (Clostridium thermocellum).